An 858-amino-acid chain; its full sequence is Zinc finger protein ZXDC (858 aa).

Disordered regions lie at residues 1–73 (MDLP…GGDS), 85–108 (DTHGQEEAEPDSGASPTEQVPAAA), and 142–175 (AAPSLHPATTPGLEPSSAAASRRGPVAASAGSPA). Residues 59-68 (APGPSPPPPE) are compositionally biased toward pro residues. Over residues 142 to 152 (AAPSLHPATTP) the composition is skewed to low complexity. 10 C2H2-type zinc fingers span residues 176-200 (YRCPEPQCALSFAKKHQLKVHLLTH), 209-233 (FKCPLDGCGWAFTTSYKLKRHLQSH), 239-263 (FSCPVGGCGKKFTTVYNLKAHMKGH), 269-291 (FKCEVCAERFPTHAKLNSHQRSH), 298-322 (YKCDFPGCEKTFITVSALFSHNRAH), 329-353 (FSCSFPGCNKQYDKACRLKIHLRSH), 359-383 (FICDSDSCGWTFTSMSKLLRHKRKH), 389-413 (FTCPVEGCGKSFTRAEHLKGHSITH), 419-443 (FECPVEGCCARFSARSSLYIHSKKH), and 452-477 (SRCPVSSCNRLFTSKHSMKAHVVRQH). A compositionally biased stretch (polar residues) spans 624 to 634 (DSPALTPSNNL). Positions 624 to 652 (DSPALTPSNNLTAPGTTPTSSDTTQETGS) are disordered. The segment covering 635-651 (TAPGTTPTSSDTTQETG) has biased composition (low complexity). A Glycyl lysine isopeptide (Lys-Gly) (interchain with G-Cter in SUMO) cross-link involves residue Lys661. Disordered stretches follow at residues 671 to 714 (DVVQ…LESG) and 727 to 751 (VKKKKQKGTGSDEGASDSAHRKVKG). The span at 681-692 (GPSQSVLSSSTE) shows a compositional bias: polar residues.

The protein belongs to the ZXD family. Self-associates. Interacts with ZXDB and CIITA. In terms of processing, sumoylated at Lys-661 with SUMO1, SUMO2 and SUMO3; sumoylation enhances the activity of the transcriptional activation domain.

The protein localises to the nucleus. In terms of biological role, cooperates with CIITA to promote transcription of MHC class I and MHC class II genes. This chain is Zinc finger protein ZXDC (Zxdc), found in Mus musculus (Mouse).